Here is a 633-residue protein sequence, read N- to C-terminus: UvrABC system protein C (633 aa).

Residues 21–100 (TDPGVYKFLD…IKELQPRYNV (80 aa)) form the GIY-YIG domain. The region spanning 214–249 (QELMDLLKDEMQRQSDAHNFEEAARLRDQVKALKDY) is the UVR domain.

The protein belongs to the UvrC family. Interacts with UvrB in an incision complex.

Its subcellular location is the cytoplasm. In terms of biological role, the UvrABC repair system catalyzes the recognition and processing of DNA lesions. UvrC both incises the 5' and 3' sides of the lesion. The N-terminal half is responsible for the 3' incision and the C-terminal half is responsible for the 5' incision. This Salinibacter ruber (strain DSM 13855 / M31) protein is UvrABC system protein C.